Consider the following 372-residue polypeptide: Alpha-1,3-mannosyl-glycoprotein 4-beta-N-acetylglucosaminyltransferase-like protein MGAT4D (372 aa).

The Cytoplasmic segment spans residues methionine 1–leucine 8. Residues leucine 9 to asparagine 29 form a helical; Signal-anchor for type II membrane protein membrane-spanning segment. The Lumenal portion of the chain corresponds to glutamine 30–tyrosine 372. N-linked (GlcNAc...) asparagine glycans are attached at residues asparagine 54 and asparagine 143.

Belongs to the glycosyltransferase 54 family. May self-associate; specifically in the endoplasmic reticulum prior to its translocation to the Golgi. Interacts with MGAT1, MGAT3 and MAN2A2; may interact with MGTA1 specifically in the Golgi. In terms of processing, N-glycosylated. O-glycosylated; further modified with terminal sialic acid residues. In terms of tissue distribution, testis.

It localises to the golgi apparatus membrane. The protein resides in the endoplasmic reticulum membrane. Functionally, may play a role in male spermatogenesis. In vitro acts as inhibitor of MGAT1 activity causing cell surface proteins to carry mainly high mannose N-glycans. The function is mediated by its lumenal domain and occurs specifically in the Golgi. A catalytic glucosyltransferase activity is not detected. May be involved in regulation of Sertoli-germ cell interactions during specific stages of spermatogenesis. The chain is Alpha-1,3-mannosyl-glycoprotein 4-beta-N-acetylglucosaminyltransferase-like protein MGAT4D from Rattus norvegicus (Rat).